The sequence spans 1140 residues: Multiple epidermal growth factor-like domains protein 10 (1140 aa).

Residues 1-25 form the signal peptide; it reads MVISLNSCLSFICLLLCHWIGTASP. The interval 1 to 857 is necessary for interaction with AP2M1, self-assembly and formation of the irregular, mosaic-like adhesion pattern; sequence MVISLNSCLS…ALPADSYQIG (857 aa). At 26–857 the chain is on the extracellular side; it reads LNLEDPNVCS…ALPADSYQIG (832 aa). The EMI domain maps to 30–107; that stretch reads DPNVCSHWES…FYESGEMCVP (78 aa). 48 disulfide bridges follow: cysteine 34–cysteine 95, cysteine 60–cysteine 69, cysteine 94–cysteine 105, cysteine 109–cysteine 118, cysteine 113–cysteine 124, cysteine 126–cysteine 135, cysteine 148–cysteine 160, cysteine 154–cysteine 167, cysteine 169–cysteine 178, cysteine 191–cysteine 203, cysteine 197–cysteine 210, cysteine 212–cysteine 221, cysteine 234–cysteine 246, cysteine 240–cysteine 253, cysteine 255–cysteine 264, cysteine 281–cysteine 289, cysteine 283–cysteine 296, cysteine 298–cysteine 307, cysteine 320–cysteine 332, cysteine 326–cysteine 339, cysteine 341–cysteine 350, cysteine 409–cysteine 421, cysteine 415–cysteine 428, cysteine 430–cysteine 439, cysteine 456–cysteine 464, cysteine 458–cysteine 471, cysteine 473–cysteine 482, cysteine 495–cysteine 507, cysteine 501–cysteine 514, cysteine 516–cysteine 525, cysteine 542–cysteine 550, cysteine 544–cysteine 557, cysteine 559–cysteine 568, cysteine 581–cysteine 593, cysteine 587–cysteine 600, cysteine 602–cysteine 611, cysteine 669–cysteine 681, cysteine 675–cysteine 688, cysteine 690–cysteine 699, cysteine 716–cysteine 724, cysteine 718–cysteine 731, cysteine 733–cysteine 742, cysteine 755–cysteine 767, cysteine 761–cysteine 774, cysteine 776–cysteine 785, cysteine 802–cysteine 810, cysteine 804–cysteine 817, and cysteine 819–cysteine 828. EGF-like domains lie at 106–136, 144–179, 187–222, 230–265, 278–308, 316–351, 405–440, 453–483, 491–526, 539–569, 577–612, 665–700, 713–743, 751–786, and 799–829; these read VPHC…TNCS, WGPH…WRCE, YGND…AFCE, HGPQ…TVCG, SQEC…ERCQ, YGVL…ERCE, YGEA…IDCS, SSRC…VDCS, WGFG…EKCE, AERC…VHCD, WGPN…TTCQ, FGKN…SDCS, IHTC…LYCT, YGKD…RHCE, and RQIC…ARCD. An N-linked (GlcNAc...) asparagine glycan is attached at asparagine 134. The N-linked (GlcNAc...) asparagine glycan is linked to asparagine 496. A helical membrane pass occupies residues 858–878; that stretch reads AIAGIIILVLVVLFLLALFII. Residues 879-1140 lie on the Cytoplasmic side of the membrane; the sequence is YRHKQKGKES…SSSNSSSSSE (262 aa). A necessary for formation of large intracellular vacuoles region spans residues 945–1140; the sequence is RDRMTVTKSK…SSSNSSSSSE (196 aa). A Phosphotyrosine; by SRC modification is found at tyrosine 1030. Residues 1111-1140 are disordered; the sequence is YDLLPVRDSSSSPKQEDSGGSSSNSSSSSE. The span at 1128–1140 shows a compositional bias: low complexity; it reads SGGSSSNSSSSSE.

The protein belongs to the MEGF family. As to quaternary structure, homomer. Interacts with GULP1 and ABCA1. Interacts with AP2M1. Does not interact with MEGF11. Binds with high affinity to complement C1q. Interacts (via the cytoplasmic domain) with NOTCH1 (via NICD domain). Post-translationally, phosphorylated on tyrosine residues. Phosphorylation at Tyr-1030 may be important for muscle cell proliferation. In terms of processing, ubiquitinated; mono- and polyubiquitinated forms are detected. Expressed in muscle (at protein level).

It is found in the cell membrane. It localises to the cell projection. Its subcellular location is the phagocytic cup. In terms of biological role, membrane receptor involved in phagocytosis by macrophages and astrocytes of apoptotic cells. Receptor for C1q, an eat-me signal, that binds phosphatidylserine expressed on the surface of apoptotic cells. Cooperates with ABCA1 within the process of engulfment. Promotes the formation of large intracellular vacuoles and may be responsible for the uptake of amyloid-beta peptides. Necessary for astrocyte-dependent apoptotic neuron clearance in the developing cerebellum. Plays role in muscle cell proliferation, adhesion and motility. Is also an essential factor in the regulation of myogenesis. Controls the balance between skeletal muscle satellite cells proliferation and differentiation through regulation of the notch signaling pathway. May also function in the mosaic spacing of specific neuron subtypes in the retina through homotypic retinal neuron repulsion. Mosaics provide a mechanism to distribute each cell type evenly across the retina, ensuring that all parts of the visual field have access to a full set of processing elements. The protein is Multiple epidermal growth factor-like domains protein 10 of Homo sapiens (Human).